The primary structure comprises 462 residues: Light-independent protochlorophyllide reductase subunit N (462 aa).

3 residues coordinate [4Fe-4S] cluster: C24, C49, and C109.

It belongs to the BchN/ChlN family. As to quaternary structure, protochlorophyllide reductase is composed of three subunits; ChlL, ChlN and ChlB. Forms a heterotetramer of two ChlB and two ChlN subunits. [4Fe-4S] cluster serves as cofactor.

The protein resides in the plastid. The protein localises to the chloroplast. It carries out the reaction chlorophyllide a + oxidized 2[4Fe-4S]-[ferredoxin] + 2 ADP + 2 phosphate = protochlorophyllide a + reduced 2[4Fe-4S]-[ferredoxin] + 2 ATP + 2 H2O. Its pathway is porphyrin-containing compound metabolism; chlorophyll biosynthesis (light-independent). Functionally, component of the dark-operative protochlorophyllide reductase (DPOR) that uses Mg-ATP and reduced ferredoxin to reduce ring D of protochlorophyllide (Pchlide) to form chlorophyllide a (Chlide). This reaction is light-independent. The NB-protein (ChlN-ChlB) is the catalytic component of the complex. This Pleurastrum terricola (Filamentous green alga) protein is Light-independent protochlorophyllide reductase subunit N.